Reading from the N-terminus, the 440-residue chain is Phosphoglycerate kinase, glycosomal (440 aa).

Residues V23, D24, F25, N26, R39, S61, H62, G64, R65, R135, H171, and R172 each coordinate (2R)-3-phosphoglycerate. Residue G217 coordinates CDP. A218 is a binding site for ADP. Positions 218 and 219 each coordinate AMP. A218 contributes to the ATP binding site. A218 is a Mg(2+) binding site. Position 219 (K219) interacts with (2R)-3-phosphoglycerate. Position 222 (D222) interacts with CDP. Residue D222 participates in Mg(2+) binding. 2 residues coordinate ADP: K223 and G241. K223 contacts AMP. G241 is a CDP binding site. 2 residues coordinate AMP: A242 and A314. Positions 242 and 314 each coordinate ATP. A314 and N338 together coordinate ADP. CDP-binding residues include G339 and F344. Residues F344, E345, D377, and S378 each contribute to the ADP site. Position 345 (E345) interacts with AMP. ATP is bound by residues D377 and S378. D377 is a binding site for Mg(2+).

It belongs to the phosphoglycerate kinase family. In terms of assembly, monomer. It depends on Mg(2+) as a cofactor.

The protein resides in the glycosome. It carries out the reaction (2R)-3-phosphoglycerate + ATP = (2R)-3-phospho-glyceroyl phosphate + ADP. It participates in carbohydrate degradation; glycolysis; pyruvate from D-glyceraldehyde 3-phosphate: step 2/5. This is Phosphoglycerate kinase, glycosomal from Trypanosoma brucei brucei.